We begin with the raw amino-acid sequence, 70 residues long: MSRKMTGIVKTFDCKSGKGLITPSDGRKDVQVHISACRQHETEALIPGIRVEFCRINGLRGPTAANVYLS.

One can recognise a CSD domain in the interval G7–V67.

Its subcellular location is the cytoplasm. In Salmonella typhi, this protein is Cold shock-like protein CspH (cspH).